A 251-amino-acid chain; its full sequence is Isoprenyl transferase (251 aa).

Residue Asp-24 is part of the active site. Residue Asp-24 participates in Mg(2+) binding. Substrate is bound by residues 25 to 28, Trp-29, Arg-37, His-41, and 69 to 71; these read GNGR and STE. Catalysis depends on Asn-72, which acts as the Proton acceptor. Residues Trp-73, Arg-75, Arg-186, and 192 to 194 contribute to the substrate site; that span reads RIS. Mg(2+) is bound at residue Glu-205.

It belongs to the UPP synthase family. In terms of assembly, homodimer. Requires Mg(2+) as cofactor.

Functionally, catalyzes the condensation of isopentenyl diphosphate (IPP) with allylic pyrophosphates generating different type of terpenoids. In Chromobacterium violaceum (strain ATCC 12472 / DSM 30191 / JCM 1249 / CCUG 213 / NBRC 12614 / NCIMB 9131 / NCTC 9757 / MK), this protein is Isoprenyl transferase.